Reading from the N-terminus, the 715-residue chain is Fatty acid oxidation complex subunit alpha (715 aa).

The segment at 1 to 190 (MTTTSAFMLN…KAGLVDDVVP (190 aa)) is enoyl-CoA hydratase. The interval 306–715 (GPLNSVGILG…WTNGETDQGN (410 aa)) is 3-hydroxyacyl-CoA dehydrogenase.

It in the N-terminal section; belongs to the enoyl-CoA hydratase/isomerase family. The protein in the central section; belongs to the 3-hydroxyacyl-CoA dehydrogenase family. As to quaternary structure, heterotetramer of two alpha chains (FadJ) and two beta chains (FadI).

The protein localises to the cytoplasm. It carries out the reaction a (3S)-3-hydroxyacyl-CoA = a (2E)-enoyl-CoA + H2O. The catalysed reaction is a 4-saturated-(3S)-3-hydroxyacyl-CoA = a (3E)-enoyl-CoA + H2O. The enzyme catalyses a (3S)-3-hydroxyacyl-CoA + NAD(+) = a 3-oxoacyl-CoA + NADH + H(+). It catalyses the reaction (3S)-3-hydroxybutanoyl-CoA = (3R)-3-hydroxybutanoyl-CoA. It participates in lipid metabolism; fatty acid beta-oxidation. Catalyzes the formation of a hydroxyacyl-CoA by addition of water on enoyl-CoA. Also exhibits 3-hydroxyacyl-CoA epimerase and 3-hydroxyacyl-CoA dehydrogenase activities. This chain is Fatty acid oxidation complex subunit alpha, found in Salmonella enteritidis PT4 (strain P125109).